Consider the following 224-residue polypeptide: Ribose-5-phosphate isomerase A (224 aa).

Substrate contacts are provided by residues 34 to 37 (TGST), 87 to 90 (DGAD), and 100 to 103 (KGGG). Glu109 functions as the Proton acceptor in the catalytic mechanism. Lys127 contributes to the substrate binding site.

Belongs to the ribose 5-phosphate isomerase family. In terms of assembly, homodimer.

The enzyme catalyses aldehydo-D-ribose 5-phosphate = D-ribulose 5-phosphate. It functions in the pathway carbohydrate degradation; pentose phosphate pathway; D-ribose 5-phosphate from D-ribulose 5-phosphate (non-oxidative stage): step 1/1. Functionally, catalyzes the reversible conversion of ribose-5-phosphate to ribulose 5-phosphate. The polypeptide is Ribose-5-phosphate isomerase A (Francisella tularensis subsp. novicida (strain U112)).